The primary structure comprises 137 residues: Large ribosomal subunit protein uL16 (137 aa).

Basic residues predominate over residues Met1 to Asn17. The interval Met1–Gly24 is disordered.

This sequence belongs to the universal ribosomal protein uL16 family. Part of the 50S ribosomal subunit.

In terms of biological role, binds 23S rRNA and is also seen to make contacts with the A and possibly P site tRNAs. The polypeptide is Large ribosomal subunit protein uL16 (Aeromonas hydrophila subsp. hydrophila (strain ATCC 7966 / DSM 30187 / BCRC 13018 / CCUG 14551 / JCM 1027 / KCTC 2358 / NCIMB 9240 / NCTC 8049)).